We begin with the raw amino-acid sequence, 691 residues long: DNA ligase (691 aa).

Residues 41-45 (DAEYD), 90-91 (SL), and glutamate 130 each bind NAD(+). Lysine 132 (N6-AMP-lysine intermediate) is an active-site residue. NAD(+) contacts are provided by arginine 153, glutamate 190, lysine 307, and lysine 331. Residues cysteine 425, cysteine 428, cysteine 443, and cysteine 449 each coordinate Zn(2+). Residues 610 to 691 (APQGVLAGKT…MHKLLEGHAR (82 aa)) enclose the BRCT domain.

The protein belongs to the NAD-dependent DNA ligase family. LigA subfamily. It depends on Mg(2+) as a cofactor. Requires Mn(2+) as cofactor.

It carries out the reaction NAD(+) + (deoxyribonucleotide)n-3'-hydroxyl + 5'-phospho-(deoxyribonucleotide)m = (deoxyribonucleotide)n+m + AMP + beta-nicotinamide D-nucleotide.. In terms of biological role, DNA ligase that catalyzes the formation of phosphodiester linkages between 5'-phosphoryl and 3'-hydroxyl groups in double-stranded DNA using NAD as a coenzyme and as the energy source for the reaction. It is essential for DNA replication and repair of damaged DNA. The sequence is that of DNA ligase from Burkholderia thailandensis (strain ATCC 700388 / DSM 13276 / CCUG 48851 / CIP 106301 / E264).